We begin with the raw amino-acid sequence, 161 residues long: Cyclic pyranopterin monophosphate synthase (161 aa).

Residues 75–77 (LCH) and 113–114 (ME) contribute to the substrate site. Residue aspartate 128 is part of the active site.

It belongs to the MoaC family. As to quaternary structure, homohexamer; trimer of dimers.

It carries out the reaction (8S)-3',8-cyclo-7,8-dihydroguanosine 5'-triphosphate = cyclic pyranopterin phosphate + diphosphate. It functions in the pathway cofactor biosynthesis; molybdopterin biosynthesis. Its function is as follows. Catalyzes the conversion of (8S)-3',8-cyclo-7,8-dihydroguanosine 5'-triphosphate to cyclic pyranopterin monophosphate (cPMP). The polypeptide is Cyclic pyranopterin monophosphate synthase (Shigella sonnei (strain Ss046)).